Reading from the N-terminus, the 57-residue chain is MTILKWALIFLVISVVAGIFGFTGVSAASADLARILFYIFAAIFIVLLILGFTIFRA.

Transmembrane regions (helical) follow at residues W6 to S26 and I35 to F55.

The protein belongs to the UPF0391 family.

It localises to the cell membrane. The chain is UPF0391 membrane protein RPD_2934 from Rhodopseudomonas palustris (strain BisB5).